The primary structure comprises 93 residues: Putative regulatory protein LA_2599 (93 aa).

The protein belongs to the RemA family.

The protein is Putative regulatory protein LA_2599 of Leptospira interrogans serogroup Icterohaemorrhagiae serovar Lai (strain 56601).